Here is an 846-residue protein sequence, read N- to C-terminus: Circadian locomoter output cycles protein kaput (846 aa).

Residues D32–R47 carry the Nuclear localization signal motif. The region spanning A34–H84 is the bHLH domain. 2 positions are modified to phosphoserine: S38 and S42. K67 participates in a covalent cross-link: Glycyl lysine isopeptide (Lys-Gly) (interchain with G-Cter in SUMO1). PAS domains are found at residues N107 to S177 and F262 to G332. The 44-residue stretch at S336–A379 folds into the PAC domain. The segment at C371–P845 is interaction with NR3C1. 2 disordered regions span residues E392–R411 and A420–T495. The residue at position 408 (S408) is a Phosphoserine. S427 bears the Phosphoserine; by GSK3-beta mark. Position 431 is a phosphoserine (S431). Over residues D447–P463 the composition is skewed to polar residues. Residues S450–S570 form an interaction with SIRT1 region. Phosphothreonine; by CDK5 is present on residues T451 and T461. A compositionally biased stretch (low complexity) spans S478–S493. The segment at F514–Q564 is implicated in the circadian rhythmicity. Low complexity-rich tracts occupy residues Q624–Q637 and S644–Q654. Disordered regions lie at residues Q624–Q654, E764–Q783, and S811–Q846. Low complexity predominate over residues S811–L829. K842 is covalently cross-linked (Glycyl lysine isopeptide (Lys-Gly) (interchain with G-Cter in SUMO1)).

As to quaternary structure, component of the circadian clock oscillator which includes the CRY proteins, CLOCK or NPAS2, BMAL1 or BMAL2, CSNK1D and/or CSNK1E, TIMELESS and the PER proteins. Interacts with KMT2A; in a circadian manner. Forms a heterodimer with BMAL1. The CLOCK-BMAL1 heterodimer is required for E-box-dependent transactivation, for CLOCK nuclear translocation and degradation, and for phosphorylation of both CLOCK and BMAL1. Interacts with NR3C1 in a ligand-dependent fashion. Interacts with ESR1 and estrogen stimulates this interaction. Interacts with the complex p35/CDK5. Interacts with RELA/p65. Interacts with KAT2B, CREBBP, EP300. Interacts with ID1 and ID3. Interacts with ID2. Interacts with MTA1. Interacts with OGA. Interacts with SIRT1. Interacts with CIPC. Interacts with EZH2. Interacts with EIF4E, PIWIL1 and DDX4. Interacts with PER2 and CRY1 and the interaction with PER and CRY proteins requires translocation to the nucleus. Interacts with PER1 and CRY2. Interaction of the CLOCK-BMAL1 heterodimer with PER or CRY inhibits transcription activation. Interaction of the CLOCK-BMAL1 with CRY1 is independent of DNA but with PER2 is off DNA. The CLOCK-BMAL1 heterodimer interacts with GSK3B. Interacts with KDM5A. Interacts with MYBBP1A. Interacts with THRAP3. Interacts with MED1; this interaction requires the presence of THRAP3. Interacts with NCOA2. The CLOCK-BMAL1 heterodimer interacts with PASD1. Interacts with ASS1 and IMPDH2; in a circadian manner. Interacts with NDUFA9. Interacts with PIWIL2 (via PIWI domain). Interacts with HNF4A. Post-translationally, ubiquitinated, leading to its proteasomal degradation. In terms of processing, O-glycosylated; contains O-GlcNAc. O-glycosylation by OGT prevents protein degradation by inhibiting ubiquitination. It also stabilizes the CLOCK-BMAL1 heterodimer thereby increasing CLOCK-BMAL1-mediated transcriptional activation of PER1/2/3 and CRY1/2. Phosphorylation is dependent on the CLOCK-BMAL1 heterodimer formation. Phosphorylation enhances the transcriptional activity, alters the subcellular localization and decreases the stability of the heterodimer by promoting its degradation. Phosphorylation shows circadian variations in the liver. May be phosphorylated by CSNK1D and CKSN1E. Post-translationally, sumoylation enhances its transcriptional activity and interaction with ESR1, resulting in up-regulation of ESR1 activity. Estrogen stimulates sumoylation. Desumoylation by SENP1 negatively regulates its transcriptional activity. Sumoylation stimulates cell proliferation and increases the proportion of S phase cells in breast cancer cell lines. In terms of processing, undergoes lysosome-mediated degradation in a time-dependent manner in the liver. Hair follicles (at protein level). Expressed in all tissues examined including spleen, thymus, prostate, testis, ovary, small intestine, colon, leukocytes, heart, brain, placenta, lung, liver, skeletal muscle, kidney and pancreas. Highest levels in testis and skeletal muscle. Low levels in thymus, lung and liver. Expressed in all brain regions with highest levels in cerebellum. Highly expressed in the suprachiasmatic nucleus (SCN).

The protein resides in the nucleus. Its subcellular location is the cytoplasm. It is found in the cytosol. The enzyme catalyses L-lysyl-[protein] + acetyl-CoA = N(6)-acetyl-L-lysyl-[protein] + CoA + H(+). Its activity is regulated as follows. There is conflicting data about the effect of NAD cofactors on activity. PubMed:11441146 suggests that the redox state of the cell can modulate the transcriptional activity of the CLOCK-BMAL1 heterodimer; NADH and NADPH enhance the DNA-binding activity of the heterodimer. PubMed:23229515 reports that NADH and NADPH have no significant effect on DNA-binding activity of the CLOCK-BMAL1 heterodimer. Functionally, transcriptional activator which forms a core component of the circadian clock. The circadian clock, an internal time-keeping system, regulates various physiological processes through the generation of approximately 24 hour circadian rhythms in gene expression, which are translated into rhythms in metabolism and behavior. It is derived from the Latin roots 'circa' (about) and 'diem' (day) and acts as an important regulator of a wide array of physiological functions including metabolism, sleep, body temperature, blood pressure, endocrine, immune, cardiovascular, and renal function. Consists of two major components: the central clock, residing in the suprachiasmatic nucleus (SCN) of the brain, and the peripheral clocks that are present in nearly every tissue and organ system. Both the central and peripheral clocks can be reset by environmental cues, also known as Zeitgebers (German for 'timegivers'). The predominant Zeitgeber for the central clock is light, which is sensed by retina and signals directly to the SCN. The central clock entrains the peripheral clocks through neuronal and hormonal signals, body temperature and feeding-related cues, aligning all clocks with the external light/dark cycle. Circadian rhythms allow an organism to achieve temporal homeostasis with its environment at the molecular level by regulating gene expression to create a peak of protein expression once every 24 hours to control when a particular physiological process is most active with respect to the solar day. Transcription and translation of core clock components (CLOCK, NPAS2, BMAL1, BMAL2, PER1, PER2, PER3, CRY1 and CRY2) plays a critical role in rhythm generation, whereas delays imposed by post-translational modifications (PTMs) are important for determining the period (tau) of the rhythms (tau refers to the period of a rhythm and is the length, in time, of one complete cycle). A diurnal rhythm is synchronized with the day/night cycle, while the ultradian and infradian rhythms have a period shorter and longer than 24 hours, respectively. Disruptions in the circadian rhythms contribute to the pathology of cardiovascular diseases, cancer, metabolic syndromes and aging. A transcription/translation feedback loop (TTFL) forms the core of the molecular circadian clock mechanism. Transcription factors, CLOCK or NPAS2 and BMAL1 or BMAL2, form the positive limb of the feedback loop, act in the form of a heterodimer and activate the transcription of core clock genes and clock-controlled genes (involved in key metabolic processes), harboring E-box elements (5'-CACGTG-3') within their promoters. The core clock genes: PER1/2/3 and CRY1/2 which are transcriptional repressors form the negative limb of the feedback loop and interact with the CLOCK|NPAS2-BMAL1|BMAL2 heterodimer inhibiting its activity and thereby negatively regulating their own expression. This heterodimer also activates nuclear receptors NR1D1/2 and RORA/B/G, which form a second feedback loop and which activate and repress BMAL1 transcription, respectively. Regulates the circadian expression of ICAM1, VCAM1, CCL2, THPO and MPL and also acts as an enhancer of the transactivation potential of NF-kappaB. Plays an important role in the homeostatic regulation of sleep. The CLOCK-BMAL1 heterodimer regulates the circadian expression of SERPINE1/PAI1, VWF, B3, CCRN4L/NOC, NAMPT, DBP, MYOD1, PPARGC1A, PPARGC1B, SIRT1, GYS2, F7, NGFR, GNRHR, BHLHE40/DEC1, ATF4, MTA1, KLF10 and also genes implicated in glucose and lipid metabolism. Promotes rhythmic chromatin opening, regulating the DNA accessibility of other transcription factors. The CLOCK-BMAL2 heterodimer activates the transcription of SERPINE1/PAI1 and BHLHE40/DEC1. The preferred binding motif for the CLOCK-BMAL1 heterodimer is 5'-CACGTGA-3', which contains a flanking adenine nucleotide at the 3-prime end of the canonical 6-nucleotide E-box sequence. CLOCK specifically binds to the half-site 5'-CAC-3', while BMAL1 binds to the half-site 5'-GTGA-3'. The CLOCK-BMAL1 heterodimer also recognizes the non-canonical E-box motifs 5'-AACGTGA-3' and 5'-CATGTGA-3'. CLOCK has an intrinsic acetyltransferase activity, which enables circadian chromatin remodeling by acetylating histones and nonhistone proteins, including its own partner BMAL1. Represses glucocorticoid receptor NR3C1/GR-induced transcriptional activity by reducing the association of NR3C1/GR to glucocorticoid response elements (GREs) via the acetylation of multiple lysine residues located in its hinge region. The acetyltransferase activity of CLOCK is as important as its transcription activity in circadian control. Acetylates metabolic enzymes IMPDH2 and NDUFA9 in a circadian manner. Facilitated by BMAL1, rhythmically interacts and acetylates argininosuccinate synthase 1 (ASS1) leading to enzymatic inhibition of ASS1 as well as the circadian oscillation of arginine biosynthesis and subsequent ureagenesis. Drives the circadian rhythm of blood pressure through transcriptional activation of ATP1B1. This Homo sapiens (Human) protein is Circadian locomoter output cycles protein kaput (CLOCK).